A 427-amino-acid chain; its full sequence is Probable WRKY transcription factor 35 (427 aa).

Disordered stretches follow at residues 1–45 and 266–336; these read MDNF…DLHV and YTSE…HPPF. The segment covering 23-40 has biased composition (pro residues); the sequence is SPGPPEGPSPSSMSPPPT. The segment at residues 209-275 is a DNA-binding region (WRKY); sequence SGEVVPSDLW…YTSEHNHPWP (67 aa). The segment covering 284-310 has biased composition (low complexity); sequence STRSSSSSSLNPSSKSSTAAATTSPSS. A compositionally biased stretch (polar residues) spans 311 to 333; it reads RVFQNNSSKDEPNNSNLPSSSTH.

The protein belongs to the WRKY group II-e family.

The protein localises to the nucleus. Transcription factor. Interacts specifically with the W box (5'-(T)TGAC[CT]-3'), a frequently occurring elicitor-responsive cis-acting element. This is Probable WRKY transcription factor 35 (WRKY35) from Arabidopsis thaliana (Mouse-ear cress).